The primary structure comprises 345 residues: L-Ala-D/L-Glu epimerase (345 aa).

Residues threonine 134 and lysine 159 each contribute to the substrate site. Catalysis depends on lysine 161, which acts as the Proton acceptor; specific for (R)-substrate epimerization. Mg(2+) is bound at residue aspartate 188. Asparagine 190 contacts substrate. Residues glutamate 216 and aspartate 241 each contribute to the Mg(2+) site. The active-site Proton acceptor; specific for (S)-substrate epimerization is the lysine 265. The substrate site is built by cysteine 292, aspartate 317, and aspartate 319.

It belongs to the mandelate racemase/muconate lactonizing enzyme family. Requires Mg(2+) as cofactor.

The enzyme catalyses L-alanyl-L-glutamate = L-alanyl-D-glutamate. The protein operates within cell wall degradation; peptidoglycan degradation. Its function is as follows. Catalyzes the epimerization of L-Ala-D-Glu to L-Ala-L-Glu and has probably a role in the metabolism of the murein peptide, of which L-Ala-D-Glu is a component. Is also able to catalyze the reverse reaction and the epimerization of a broad range of other dipeptides; is most efficient with L-Ala-D/L-Phe, L-Ala-D/L-Tyr, and L-Ala-D/L-His. This is L-Ala-D/L-Glu epimerase from Thermotoga maritima (strain ATCC 43589 / DSM 3109 / JCM 10099 / NBRC 100826 / MSB8).